A 452-amino-acid polypeptide reads, in one-letter code: Cobyrinate a,c-diamide synthase (452 aa).

The region spanning 248-441 is the GATase cobBQ-type domain; the sequence is RVAYALDAAF…LHIHFYQNPA (194 aa). The active-site Nucleophile is cysteine 330.

Belongs to the CobB/CbiA family. The cofactor is Mg(2+).

The catalysed reaction is cob(II)yrinate + 2 L-glutamine + 2 ATP + 2 H2O = cob(II)yrinate a,c diamide + 2 L-glutamate + 2 ADP + 2 phosphate + 2 H(+). It participates in cofactor biosynthesis; adenosylcobalamin biosynthesis; cob(II)yrinate a,c-diamide from sirohydrochlorin (anaerobic route): step 10/10. Its function is as follows. Catalyzes the ATP-dependent amidation of the two carboxylate groups at positions a and c of cobyrinate, using either L-glutamine or ammonia as the nitrogen source. The protein is Cobyrinate a,c-diamide synthase of Listeria innocua serovar 6a (strain ATCC BAA-680 / CLIP 11262).